An 863-amino-acid chain; its full sequence is FO synthase (863 aa).

Radical SAM core domains lie at Ile-91 to Asn-343 and Val-551 to Gln-792. The cofG-like stretch occupies residues Thr-92–Leu-424. [4Fe-4S] cluster-binding residues include Cys-105, Cys-109, Cys-112, Cys-565, Cys-569, and Cys-572. Residues Asp-528–Arg-861 are cofH-like.

The protein in the N-terminal section; belongs to the radical SAM superfamily. CofG family. In the C-terminal section; belongs to the radical SAM superfamily. CofH family. Requires [4Fe-4S] cluster as cofactor.

The enzyme catalyses 5-amino-6-(D-ribitylamino)uracil + L-tyrosine + S-adenosyl-L-methionine = 5-amino-5-(4-hydroxybenzyl)-6-(D-ribitylimino)-5,6-dihydrouracil + 2-iminoacetate + 5'-deoxyadenosine + L-methionine + H(+). It carries out the reaction 5-amino-5-(4-hydroxybenzyl)-6-(D-ribitylimino)-5,6-dihydrouracil + S-adenosyl-L-methionine = 7,8-didemethyl-8-hydroxy-5-deazariboflavin + 5'-deoxyadenosine + L-methionine + NH4(+) + H(+). Its pathway is cofactor biosynthesis; coenzyme F0 biosynthesis. Functionally, catalyzes the radical-mediated synthesis of 7,8-didemethyl-8-hydroxy-5-deazariboflavin (FO) from 5-amino-6-(D-ribitylamino)uracil and L-tyrosine. The sequence is that of FO synthase (fbiC) from Mycobacterium leprae (strain TN).